The primary structure comprises 509 residues: Surface lipoprotein assembly modifier (509 aa).

Residues 1–32 (MNLMINLKPLTFLPFFGRLVFLSGVIYNTAWA) form the signal peptide. The interval 33–204 (NTVIPVDNSR…SYIDTINQRD (172 aa)) is N-terminal domain. The interval 43 to 72 (PDETFSQTSPKQHLFSQKPKPTEPTSSASS) is disordered. Residues 46-57 (TFSQTSPKQHLF) show a composition bias toward polar residues. One copy of the TPR repeat lies at 120 to 153 (FLLKWAQAVVARKQGKLNESVRLYRQIIAEKPNL). The tract at residues 205-509 (SWNVYGGVNY…RIYLTFSKTF (305 aa)) is C-terminal probable beta barrel. The next 14 membrane-spanning stretches (beta stranded) occupy residues 206–216 (WNVYGGVNYLH), 245–256 (LSYFINLSKNWS), 261–270 (FFTEFSADIN), 284–294 (STRLNLGGGYR), 298–308 (TEVKLMPFVEQ), 331–341 (SGINLDVDYWL), 345–355 (WKISTVLEYTE), 371–381 (YSISNTLIYMP), 386–395 (FWFVGLDYYQ), 408–417 (QGIRLGWGQE), 423–432 (STRLQTSYAT), 461–470 (GVNFTIWHRS), 476–485 (ITPKITWAYQ), and 499–509 (NRIYLTFSKTF).

This sequence belongs to the Slam family.

The protein resides in the cell outer membrane. Functionally, required for correct export to the cell surface of some cell outer membrane lipoproteins (tested with PM1514) upon heterologous expression in E.coli and probably also in Pasteurella. The protein is Surface lipoprotein assembly modifier of Pasteurella multocida (strain Pm70).